We begin with the raw amino-acid sequence, 560 residues long: Eukaryotic translation initiation factor 3 subunit D-1 (560 aa).

A disordered region spans residues 98–166; the sequence is VQKPPHQRGR…RGPPPKMRES (69 aa). A compositionally biased stretch (basic residues) spans 100–121; sequence KPPHQRGRFRNMRNSRSGRGRN. T128 is modified (phosphothreonine). Over residues 147-156 the composition is skewed to basic residues; sequence GRGMGKKFGH. Residues 291 to 305 are RNA gate; sequence EFDLLTVNESSVEPP.

The protein belongs to the eIF-3 subunit D family. In terms of assembly, component of the eukaryotic translation initiation factor 3 (eIF-3) complex. The eIF-3 complex interacts with pix.

The protein resides in the cytoplasm. In terms of biological role, mRNA cap-binding component of the eukaryotic translation initiation factor 3 (eIF-3) complex, which is involved in protein synthesis of a specialized repertoire of mRNAs and, together with other initiation factors, stimulates binding of mRNA and methionyl-tRNAi to the 40S ribosome. The eIF-3 complex specifically targets and initiates translation of a subset of mRNAs involved in cell proliferation. In the eIF-3 complex, eif3d specifically recognizes and binds the 7-methylguanosine cap of a subset of mRNAs. In Drosophila sechellia (Fruit fly), this protein is Eukaryotic translation initiation factor 3 subunit D-1.